The chain runs to 570 residues: Proline--tRNA ligase (570 aa).

The protein belongs to the class-II aminoacyl-tRNA synthetase family. ProS type 1 subfamily. As to quaternary structure, homodimer.

It is found in the cytoplasm. The catalysed reaction is tRNA(Pro) + L-proline + ATP = L-prolyl-tRNA(Pro) + AMP + diphosphate. In terms of biological role, catalyzes the attachment of proline to tRNA(Pro) in a two-step reaction: proline is first activated by ATP to form Pro-AMP and then transferred to the acceptor end of tRNA(Pro). As ProRS can inadvertently accommodate and process non-cognate amino acids such as alanine and cysteine, to avoid such errors it has two additional distinct editing activities against alanine. One activity is designated as 'pretransfer' editing and involves the tRNA(Pro)-independent hydrolysis of activated Ala-AMP. The other activity is designated 'posttransfer' editing and involves deacylation of mischarged Ala-tRNA(Pro). The misacylated Cys-tRNA(Pro) is not edited by ProRS. This is Proline--tRNA ligase from Shewanella sp. (strain ANA-3).